The following is a 109-amino-acid chain: Cell division protein ZapA (109 aa).

Residues E22 to R99 are a coiled coil.

It belongs to the ZapA family. Type 1 subfamily. In terms of assembly, homodimer. Interacts with FtsZ.

It localises to the cytoplasm. Its function is as follows. Activator of cell division through the inhibition of FtsZ GTPase activity, therefore promoting FtsZ assembly into bundles of protofilaments necessary for the formation of the division Z ring. It is recruited early at mid-cell but it is not essential for cell division. In Yersinia enterocolitica serotype O:8 / biotype 1B (strain NCTC 13174 / 8081), this protein is Cell division protein ZapA.